The sequence spans 77 residues: Cell division topological specificity factor (77 aa).

This sequence belongs to the MinE family.

Prevents the cell division inhibition by proteins MinC and MinD at internal division sites while permitting inhibition at polar sites. This ensures cell division at the proper site by restricting the formation of a division septum at the midpoint of the long axis of the cell. This is Cell division topological specificity factor from Helicobacter pylori (strain Shi470).